Consider the following 802-residue polypeptide: Lon protease (802 aa).

Residues 17–211 (SIVMPLFEVV…LFLHILTKHK (195 aa)) form the Lon N-terminal domain. Residue 363–370 (GPPGTGKT) coordinates ATP. Residues 600-780 (ENVPGVVTGL…EEVLREALDI (181 aa)) enclose the Lon proteolytic domain. Active-site residues include Ser-686 and Lys-729.

The protein belongs to the peptidase S16 family. In terms of assembly, homohexamer. Organized in a ring with a central cavity.

It is found in the cytoplasm. The catalysed reaction is Hydrolysis of proteins in presence of ATP.. Functionally, ATP-dependent serine protease that mediates the selective degradation of mutant and abnormal proteins as well as certain short-lived regulatory proteins. Required for cellular homeostasis and for survival from DNA damage and developmental changes induced by stress. Degrades polypeptides processively to yield small peptide fragments that are 5 to 10 amino acids long. Binds to DNA in a double-stranded, site-specific manner. In Methanosarcina barkeri (strain Fusaro / DSM 804), this protein is Lon protease.